A 343-amino-acid chain; its full sequence is L-threonine 3-dehydrogenase (343 aa).

Cysteine 38 is a Zn(2+) binding site. Residues threonine 40 and histidine 43 each act as charge relay system in the active site. Zn(2+) contacts are provided by histidine 63, glutamate 64, cysteine 93, cysteine 96, cysteine 99, and cysteine 107. NAD(+) is bound by residues isoleucine 175, aspartate 195, arginine 200, 262 to 264 (LGI), and 286 to 287 (IY).

It belongs to the zinc-containing alcohol dehydrogenase family. As to quaternary structure, homotetramer. It depends on Zn(2+) as a cofactor.

Its subcellular location is the cytoplasm. It catalyses the reaction L-threonine + NAD(+) = (2S)-2-amino-3-oxobutanoate + NADH + H(+). It participates in amino-acid degradation; L-threonine degradation via oxydo-reductase pathway; glycine from L-threonine: step 1/2. In terms of biological role, catalyzes the NAD(+)-dependent oxidation of L-threonine to 2-amino-3-ketobutyrate. This Pectobacterium carotovorum subsp. carotovorum (strain PC1) protein is L-threonine 3-dehydrogenase.